Reading from the N-terminus, the 184-residue chain is Fungal defensin copsin (184 aa).

The first 23 residues, 1–23 (MKLSTSLLAIVAVASTFIGNALS), serve as a signal peptide directing secretion. A propeptide spanning residues 24–127 (ATTVPGCFAE…LGRVLPVEKR (104 aa)) is cleaved from the precursor. Q128 is modified (pyrrolidone carboxylic acid). 6 disulfides stabilise this stretch: C130–C159, C137–C167, C145–C175, C149–C177, C152–C184, and C162–C181.

It belongs to the invertebrate defensin family. In terms of processing, contains a unique connectivity of 6 cysteine bonds in contrast to most other CS-alpha-beta defensins which are linked by 3 or 4 disulfide bonds. Disulfide bonds are essential for structural integrity and antibacterial activity, since activity is lost after treatment with reducing agents. Thanks to disulfide bonds and N-terminal pyroglutamate, the protein is extremely stable in a wide pH and temperature range and insensitive toward proteases.

It localises to the secreted. It is found in the target cell membrane. In terms of biological role, antimicrobial peptide that acts against Gram-positive bacteria (Listeria spp., Enterococcus spp., B.subtilis, B.anthracis, P.aeruginosa). Is not active against Gram-negative bacteria. It selectively inhibits peptidoglycan biosynthesis through complex formation with the cell wall precursor lipid II (1:1 molar ratio), probably anchoring lipid II to the membrane, thus inhibiting cell wall synthesis. The interaction with lipid II involves the third position of the pentapeptide. Shows bactericidal activity at about 2-fold minimal inhibitory concentrations (MIC), but does not form pore across the membrane. The polypeptide is Fungal defensin copsin (Coprinopsis cinerea (Inky cap fungus)).